The chain runs to 133 residues: Basic phospholipase A2 beta-bungarotoxin A-AL2 chain (133 aa).

A signal peptide spans 1–5 (FLLGA). Positions 6–13 (ANIPPHPL) are excised as a propeptide. Disulfide bonds link C40–C132, C42–C58, C57–C113, C64–C106, C74–C99, and C92–C104. Ca(2+)-binding residues include Y41, G43, and G45. Residue H61 is part of the active site. D62 contributes to the Ca(2+) binding site. Residue D107 is part of the active site.

This sequence belongs to the phospholipase A2 family. Group I subfamily. D49 sub-subfamily. Heterodimer; disulfide-linked. The A chains have phospholipase A2 activity and the B chains show homology with the basic protease inhibitors. Ca(2+) is required as a cofactor. In terms of tissue distribution, expressed by the venom gland.

The protein localises to the secreted. It catalyses the reaction a 1,2-diacyl-sn-glycero-3-phosphocholine + H2O = a 1-acyl-sn-glycero-3-phosphocholine + a fatty acid + H(+). Its function is as follows. Snake venom phospholipase A2 (PLA2) that inhibits neuromuscular transmission by blocking acetylcholine release from the nerve termini. PLA2 catalyzes the calcium-dependent hydrolysis of the 2-acyl groups in 3-sn-phosphoglycerides. In Bungarus multicinctus (Many-banded krait), this protein is Basic phospholipase A2 beta-bungarotoxin A-AL2 chain.